The primary structure comprises 368 residues: Galactoside 2-alpha-L-fucosyltransferase SEC1 (368 aa).

The segment at 1–20 (MWDMRAVAPQRPAAGHPRAG) is disordered. Residues 1–31 (MWDMRAVAPQRPAAGHPRAGWPRKLKTAATR) lie on the Cytoplasmic side of the membrane. Residues 32–52 (FWATCPSSSTVCFLFVIFAVS) traverse the membrane as a helical segment. Over 53-368 (TVFHCHRRLA…NLGQARESHP (316 aa)) the chain is Lumenal.

Belongs to the glycosyltransferase 11 family. Kidney.

The protein localises to the golgi apparatus. It localises to the golgi stack membrane. It catalyses the reaction a ganglioside GM1 + GDP-beta-L-fucose = a ganglioside Fuc-GM1 + GDP + H(+). It participates in protein modification; protein glycosylation. In terms of biological role, catalyzes the transfer of alpha 1,2-linked fucose to ganglioside GM1 and galacto-N-biose. The chain is Galactoside 2-alpha-L-fucosyltransferase SEC1 from Bos taurus (Bovine).